A 283-amino-acid chain; its full sequence is Thymidylate synthase (283 aa).

DUMP is bound at residue Arg21. (6R)-5,10-methylene-5,6,7,8-tetrahydrofolate is bound at residue His51. 123–124 (RR) serves as a coordination point for dUMP. The active-site Nucleophile is Cys156. Residues 185 to 188 (RSAD), Asn196, and 226 to 228 (HIY) each bind dUMP. Asp188 serves as a coordination point for (6R)-5,10-methylene-5,6,7,8-tetrahydrofolate. Residue Ala282 coordinates (6R)-5,10-methylene-5,6,7,8-tetrahydrofolate.

This sequence belongs to the thymidylate synthase family. Bacterial-type ThyA subfamily. Homodimer.

The protein localises to the cytoplasm. The enzyme catalyses dUMP + (6R)-5,10-methylene-5,6,7,8-tetrahydrofolate = 7,8-dihydrofolate + dTMP. Its pathway is pyrimidine metabolism; dTTP biosynthesis. Its function is as follows. Catalyzes the reductive methylation of 2'-deoxyuridine-5'-monophosphate (dUMP) to 2'-deoxythymidine-5'-monophosphate (dTMP) while utilizing 5,10-methylenetetrahydrofolate (mTHF) as the methyl donor and reductant in the reaction, yielding dihydrofolate (DHF) as a by-product. This enzymatic reaction provides an intracellular de novo source of dTMP, an essential precursor for DNA biosynthesis. This is Thymidylate synthase from Flavobacterium johnsoniae (strain ATCC 17061 / DSM 2064 / JCM 8514 / BCRC 14874 / CCUG 350202 / NBRC 14942 / NCIMB 11054 / UW101) (Cytophaga johnsonae).